Here is a 523-residue protein sequence, read N- to C-terminus: Frizzled-4 (523 aa).

An N-terminal signal peptide occupies residues 1 to 22 (MGARSLTLLYLLCCLVVGLIAG). Residues 23-198 (FGEEEERSCD…KCGYDSGLYN (176 aa)) lie on the Extracellular side of the membrane. The region spanning 26–147 (EEERSCDPIR…NDHNHMCMEG (122 aa)) is the FZ domain. Disulfide bonds link Cys-31/Cys-92, Cys-39/Cys-85, Cys-76/Cys-114, Cys-103/Cys-144, Cys-107/Cys-131, Cys-167/Cys-186, Cys-190/Cys-268, and Cys-288/Cys-363. N-linked (GlcNAc...) asparagine glycosylation occurs at Asn-45. Asn-130 carries an N-linked (GlcNAc...) asparagine glycan. The helical transmembrane segment at 199-229 (RLSKEFTDIWMAVWASLCFISTAFTVLTFLI) threads the bilayer. At 230 to 235 (DSSRFC) the chain is on the cytoplasmic side. Residues 236–261 (YPERPIIFLSMCYNIYSIAYIVRLTV) form a helical membrane-spanning segment. Residues 262 to 285 (GRERISCDFEEAAEPVLIQEGLKN) are Extracellular-facing. The chain crosses the membrane as a helical span at residues 286 to 319 (TGCAIIFLLMYFFGMASSIWWVILTLTWFLAAGL). Over 320-322 (KWG) the chain is Cytoplasmic. Residues 323–351 (HEAIEMHSSYFHIAAWAIPAVKTIVILIM) form a helical membrane-spanning segment. The Extracellular portion of the chain corresponds to 352 to 369 (RLVDADELTGLCYVGNQN). The chain crosses the membrane as a helical span at residues 370 to 396 (IDALTGFVVAPLFTYLVIGTLFIAAGL). Residues 397–417 (VALFKIRSNLQKDGTKTDKLE) are Cytoplasmic-facing. A helical transmembrane segment spans residues 418–443 (RLMVKIGVFSVLYTVPATCVIACYFY). Over 444–459 (EVSNWNVFRYTADDSN) the chain is Extracellular. Residues 460-481 (MAVEMLNIFMSLLVGITSGMWI) traverse the membrane as a helical segment. The Cytoplasmic portion of the chain corresponds to 482 to 523 (WSAKTLHTWQKCTNRLVNSGKVKRKKRVDGWVKPGKGNETVV). Residues 485–490 (KTLHTW) carry the Lys-Thr-X-X-X-Trp motif, mediates interaction with the PDZ domain of Dvl family members motif. A PDZ-binding motif is present at residues 521-523 (TVV).

This sequence belongs to the G-protein coupled receptor Fz/Smo family. Interacts (via FZ domain) with tsku; tsku competes with wnt2b for binding to fzd4, inhibiting Wnt signaling and repressing peripheral eye development.

The protein resides in the cell membrane. In terms of biological role, receptor for Wnt proteins. Most frizzled receptors are coupled to the beta-catenin canonical signaling pathway, which leads to the activation of disheveled proteins, inhibition of GSK-3 kinase, nuclear accumulation of beta-catenin and activation of Wnt target genes. A second signaling pathway involving PKC and calcium fluxes has been seen for some family members, but it is not yet clear if it represents a distinct pathway or if it can be integrated in the canonical pathway, as PKC seems to be required for Wnt-mediated inactivation of GSK-3 kinase. Both pathways seem to involve interactions with G-proteins. May be involved in transduction and intercellular transmission of polarity information during tissue morphogenesis and/or in differentiated tissues. Activated by Wnt5A. The sequence is that of Frizzled-4 (fzd4) from Xenopus laevis (African clawed frog).